We begin with the raw amino-acid sequence, 562 residues long: Probable malate:quinone oxidoreductase (562 aa).

The segment at Ser535–Leu562 is disordered. The segment covering Pro545–Leu562 has biased composition (polar residues).

It belongs to the MQO family. Requires FAD as cofactor.

It catalyses the reaction (S)-malate + a quinone = a quinol + oxaloacetate. Its pathway is carbohydrate metabolism; tricarboxylic acid cycle; oxaloacetate from (S)-malate (quinone route): step 1/1. This chain is Probable malate:quinone oxidoreductase, found in Xylella fastidiosa (strain M23).